The sequence spans 152 residues: Ribosome maturation factor RimP (152 aa).

This sequence belongs to the RimP family.

The protein localises to the cytoplasm. Required for maturation of 30S ribosomal subunits. The protein is Ribosome maturation factor RimP of Escherichia coli (strain K12 / MC4100 / BW2952).